The chain runs to 176 residues: Caltractin (176 aa).

The disordered stretch occupies residues 1–27 (MNRAAIAAGKPSGSISTGKPRRKTRAE). 4 EF-hand domains span residues 31-66 (EMKH…LGFD), 67-102 (VKKE…KISN), 104-139 (DPTE…LSEN), and 140-175 (ISDE…TSAF). Positions 44, 46, 48, 50, and 55 each coordinate Ca(2+). 5 residues coordinate Ca(2+): Asp-153, Asp-155, Asp-157, Glu-159, and Asp-164.

The protein belongs to the centrin family. In terms of assembly, monomer.

It is found in the cytoplasm. It localises to the cytoskeleton. The protein localises to the microtubule organizing center. The protein resides in the centrosome. Plays a fundamental role in microtubule-organizing center structure and function. The polypeptide is Caltractin (CAL) (Giardia intestinalis (Giardia lamblia)).